The chain runs to 356 residues: Methionine import ATP-binding protein MetN 1 (356 aa).

The region spanning 2-241 (IELKNISVTF…PQQPLTKDFI (240 aa)) is the ABC transporter domain. 38–45 (GYSGAGKS) serves as a coordination point for ATP.

It belongs to the ABC transporter superfamily. Methionine importer (TC 3.A.1.24) family. The complex is composed of two ATP-binding proteins (MetN), two transmembrane proteins (MetI) and a solute-binding protein (MetQ).

It localises to the cell membrane. The enzyme catalyses L-methionine(out) + ATP + H2O = L-methionine(in) + ADP + phosphate + H(+). The catalysed reaction is D-methionine(out) + ATP + H2O = D-methionine(in) + ADP + phosphate + H(+). In terms of biological role, part of the ABC transporter complex MetNIQ involved in methionine import. Responsible for energy coupling to the transport system. The protein is Methionine import ATP-binding protein MetN 1 of Enterococcus faecalis (strain ATCC 700802 / V583).